The sequence spans 272 residues: Cholesterol 25-hydroxylase (272 aa).

An N-linked (GlcNAc...) asparagine glycan is attached at asparagine 5. The next 3 helical transmembrane spans lie at 38–58, 84–104, and 121–141; these read FFPV…FVVL, LLPC…PVTL, and LLLL…EFFV. The Fatty acid hydroxylase domain occupies 129–263; the sequence is LFCLLLFDME…FTHWDKILGT (135 aa). Positions 142–146 match the Histidine box-1 motif; sequence WHLLH. A Histidine box-2 motif is present at residues 157–161; that stretch reads HKVHH. Asparagine 163 and asparagine 189 each carry an N-linked (GlcNAc...) asparagine glycan. A Histidine box-3 motif is present at residues 238–244; it reads HHDLHHS.

Belongs to the sterol desaturase family. The cofactor is Fe cation. Post-translationally, N-glycosylated.

It localises to the endoplasmic reticulum membrane. It carries out the reaction cholesterol + AH2 + O2 = 25-hydroxycholesterol + A + H2O. It catalyses the reaction cholesterol + NADPH + O2 + H(+) = 25-hydroxycholesterol + NADP(+) + H2O. Catalyzes the formation of 25-hydroxycholesterol from cholesterol, leading to repress cholesterol biosynthetic enzymes. Plays a key role in cell positioning and movement in lymphoid tissues: 25-hydroxycholesterol is an intermediate in biosynthesis of 7-alpha,25-dihydroxycholesterol (7-alpha,25-OHC), an oxysterol that acts as a ligand for the G protein-coupled receptor GPR183/EBI2, a chemotactic receptor for a number of lymphoid cells. May play an important role in regulating lipid metabolism by synthesizing a corepressor that blocks sterol regulatory element binding protein (SREBP) processing. As an interferon-stimulated gene, has broad antiviral activities against a wide range of enveloped viruses, such as vesicular stomatitis virus (VSV) and SARS coronavirus-2 (SARS-CoV-2). Its product, 25-hydroxycholesterol, activates the ER-localized enzyme ACAT to induce internalization of accessible cholesterol on the plasma membrane and restricts SARS-CoV-2 S protein-mediated fusion which inhibits virus replication. In testis, production of 25-hydroxycholesterol by macrophages plays a role in Leydig cell differentiation. Required to restrain inflammation in macrophages: production of 25-hydroxycholesterol protects macrophages from cholesterol overload, thereby preventing mitochondrial DNA release and subsequent activation of the AIM2 inflammasome. The protein is Cholesterol 25-hydroxylase of Homo sapiens (Human).